The primary structure comprises 542 residues: Chaperonin GroEL (542 aa).

Residues 29–32, 86–90, Gly-413, 477–479, and Asp-493 contribute to the ATP site; these read TLGP, DGTTT, and NAA.

It belongs to the chaperonin (HSP60) family. In terms of assembly, forms a cylinder of 14 subunits composed of two heptameric rings stacked back-to-back. Interacts with the co-chaperonin GroES.

The protein localises to the cytoplasm. The catalysed reaction is ATP + H2O + a folded polypeptide = ADP + phosphate + an unfolded polypeptide.. In terms of biological role, together with its co-chaperonin GroES, plays an essential role in assisting protein folding. The GroEL-GroES system forms a nano-cage that allows encapsulation of the non-native substrate proteins and provides a physical environment optimized to promote and accelerate protein folding. The chain is Chaperonin GroEL from Beutenbergia cavernae (strain ATCC BAA-8 / DSM 12333 / CCUG 43141 / JCM 11478 / NBRC 16432 / NCIMB 13614 / HKI 0122).